Reading from the N-terminus, the 232-residue chain is uncharacterized protein (232 aa).

A run of 5 helical transmembrane segments spans residues 69-91 (LISA…YILF), 104-126 (FLEP…FFAL), 139-161 (FSRF…FFFL), 166-188 (ICFT…AMLS), and 200-219 (FIYS…QLII).

It is found in the cell membrane. This is an uncharacterized protein from Bacillus subtilis (strain 168).